Here is a 192-residue protein sequence, read N- to C-terminus: Leucine-rich repeat-containing protein 51 (192 aa).

LRR repeat units follow at residues 50–71 (MTQSLWLNNNVLTDLRDFNHAV), 80–101 (NLAWIDLSFNDLTSIDPVLTTF), and 103–124 (NLSVLYLHGNSIQRLGEVNKLA). In terms of domain architecture, LRRCT spans 137–175 (NPIEEEKGYRQYVLCTLPHITTFDFSGVTKADRTTAEVW).

Its subcellular location is the cytoplasm. The protein is Leucine-rich repeat-containing protein 51 of Bos taurus (Bovine).